A 292-amino-acid chain; its full sequence is MIRHLITTKDFTKDEIEDLFDDAQKFLNEPTPHLLKNKLIITIFFENSTRTRSSFEVAAKRLGAEVVSLDVSKSSTKKGETLFDTAANLNAMEPHAIVVRHKSAGVPYILSKYVSCSLINGGDGAHAHPTQALLDLFTLKQHFKAVEGKKIAIVGDIKNSRVANSNIELLQRFGMKVILVAPPHFLPKTDLPISYDLHAIINEVDAIMSLRTQTERHKYPIYASLRDYGNDFCITKDLIKDKDLIILHPGPVHRNIDISDEVLTDPRCKVLEQVKNGVAVRMAVLKKLIMHG.

Positions 50 and 51 each coordinate carbamoyl phosphate. Lysine 78 is a binding site for L-aspartate. The carbamoyl phosphate site is built by arginine 100, histidine 128, and glutamine 131. Arginine 161 and arginine 211 together coordinate L-aspartate. Carbamoyl phosphate is bound by residues glycine 250 and proline 251.

Belongs to the aspartate/ornithine carbamoyltransferase superfamily. ATCase family. As to quaternary structure, heterododecamer (2C3:3R2) of six catalytic PyrB chains organized as two trimers (C3), and six regulatory PyrI chains organized as three dimers (R2).

The enzyme catalyses carbamoyl phosphate + L-aspartate = N-carbamoyl-L-aspartate + phosphate + H(+). It functions in the pathway pyrimidine metabolism; UMP biosynthesis via de novo pathway; (S)-dihydroorotate from bicarbonate: step 2/3. Its function is as follows. Catalyzes the condensation of carbamoyl phosphate and aspartate to form carbamoyl aspartate and inorganic phosphate, the committed step in the de novo pyrimidine nucleotide biosynthesis pathway. In Nitratiruptor sp. (strain SB155-2), this protein is Aspartate carbamoyltransferase catalytic subunit.